The chain runs to 210 residues: Thymidylate kinase (210 aa).

Gly-16–Ser-23 is an ATP binding site.

The protein belongs to the thymidylate kinase family.

It catalyses the reaction dTMP + ATP = dTDP + ADP. Its function is as follows. Phosphorylation of dTMP to form dTDP in both de novo and salvage pathways of dTTP synthesis. The sequence is that of Thymidylate kinase from Leifsonia xyli subsp. xyli (strain CTCB07).